Consider the following 212-residue polypeptide: General odorant-binding protein 68 (212 aa).

Residues 1–28 form the signal peptide; it reads MATTIARIGSANWAKLLVLLWLVQLATA. Disulfide bonds link C64–C85, C80–C152, and C130–C162.

Belongs to the PBP/GOBP family.

It localises to the secreted. Functionally, present in the aqueous fluid surrounding olfactory sensory dendrites and are thought to aid in the capture and transport of hydrophobic odorants into and through this fluid. This chain is General odorant-binding protein 68 (Obp68), found in Anopheles gambiae (African malaria mosquito).